The chain runs to 144 residues: Antigenic protein SchS21 (144 aa).

Asparagine 36 is a glycosylation site (N-linked (GlcNAc...) asparagine). An igE-binding epitope region spans residues 91–105; that stretch reads VKQMWPAESRKPMSG.

In terms of assembly, homodimer. The cofactor is Mg(2+).

The protein resides in the secreted. Its function is as follows. Has exodeoxyribonuclease activity with lambda-DNA and salmon testes dsDNA. No activity with circular plasmid DNA. The physiological role of this enzyme may be to degrade environmental DNA, and thus mobilize nitrogen for uptake. The polypeptide is Antigenic protein SchS21 (Stachybotrys chartarum (Toxic black mold)).